The primary structure comprises 266 residues: Glucosamine-6-phosphate deaminase (266 aa).

Catalysis depends on D72, which acts as the Proton acceptor; for enolization step. The active-site For ring-opening step is D141. The active-site Proton acceptor; for ring-opening step is H143. E148 (for ring-opening step) is an active-site residue.

This sequence belongs to the glucosamine/galactosamine-6-phosphate isomerase family. NagB subfamily. As to quaternary structure, homohexamer.

The catalysed reaction is alpha-D-glucosamine 6-phosphate + H2O = beta-D-fructose 6-phosphate + NH4(+). Its pathway is amino-sugar metabolism; N-acetylneuraminate degradation; D-fructose 6-phosphate from N-acetylneuraminate: step 5/5. With respect to regulation, allosterically activated by N-acetylglucosamine 6-phosphate (GlcNAc6P). Its function is as follows. Catalyzes the reversible isomerization-deamination of glucosamine 6-phosphate (GlcN6P) to form fructose 6-phosphate (Fru6P) and ammonium ion. The chain is Glucosamine-6-phosphate deaminase from Aeromonas salmonicida (strain A449).